Consider the following 339-residue polypeptide: Phenylalanine--tRNA ligase alpha subunit (339 aa).

Glu254 is a Mg(2+) binding site.

The protein belongs to the class-II aminoacyl-tRNA synthetase family. Phe-tRNA synthetase alpha subunit type 1 subfamily. As to quaternary structure, tetramer of two alpha and two beta subunits. Mg(2+) serves as cofactor.

It localises to the cytoplasm. It catalyses the reaction tRNA(Phe) + L-phenylalanine + ATP = L-phenylalanyl-tRNA(Phe) + AMP + diphosphate + H(+). This Clostridium botulinum (strain Langeland / NCTC 10281 / Type F) protein is Phenylalanine--tRNA ligase alpha subunit.